A 54-amino-acid polypeptide reads, in one-letter code: Ovomucoid (54 aa).

A Kazal-like domain is found at 4 to 54; it reads VDCSEYPKPACTLEHRPLCGSDNKTYGNKCNFCNAVVESNGTLTLSHFGKC. Cystine bridges form between Cys6–Cys36, Cys14–Cys33, and Cys22–Cys54. A glycan (N-linked (GlcNAc...) asparagine) is linked at Asn43.

The protein localises to the secreted. The sequence is that of Ovomucoid from Pavo muticus (Green peafowl).